We begin with the raw amino-acid sequence, 357 residues long: Queuosine-tRNA galactosyltransferase (357 aa).

It belongs to the glycosyltransferase 2 family.

Its subcellular location is the cytoplasm. It catalyses the reaction queuosine(34) in tRNA(Tyr) + UDP-alpha-D-galactose = O-5''-beta-D-galactosylqueuosine(34) in tRNA(Tyr) + UDP + H(+). Functionally, glycosyltransferase that specifically catalyzes galactosylation of cytoplasmic tRNA(Tyr) modified with queuosine at position 34 (queuosine(34)). Galactosylates the cyclopentene hydroxyl group of queuosine(34) in tRNA(Tyr) to form galactosyl-queuosine(34). Mannosylation of queuosine(34) in tRNA(Tyr) is required to slow-down elongation at cognate codons UAC and suppress stop codon readthrough, thereby regulating protein translation. This is Queuosine-tRNA galactosyltransferase from Rattus norvegicus (Rat).